Reading from the N-terminus, the 296-residue chain is MKQKMGTHKFRFSDMMPHSWLYKLKGMSRSSRKHHLSSPKHLSSADASSSRKLRDPLRRLSSTAHHPQASNSPPKSSSFKRKIKRKTVYKPSSRLKLSTSSSLNHRSKSSSSANAISDSAVGSFLDRVSSPSDQNFVHDPEPHSSIDIKDELSVRKLDDVPEDPSVSPNLSPETAKEPPFEMMTQQKLKKPKAHSSGIKIPTKIVRKKKKERTSQVSKKKGVVKSFAIVLSSVDPEKDFRESMVEMIMENKMREQKDLEDLLACYLSLNSSEYHDVIIKAFENTWLHLTQGLSISL.

2 disordered regions span residues 27 to 115 (MSRS…SANA) and 131 to 196 (PSDQ…AHSS). A compositionally biased stretch (polar residues) spans 60-69 (LSSTAHHPQA). Residues 78–88 (SFKRKIKRKTV) are compositionally biased toward basic residues. Residues 92-115 (SSRLKLSTSSSLNHRSKSSSSANA) are compositionally biased toward low complexity. Residues 136 to 159 (FVHDPEPHSSIDIKDELSVRKLDD) show a composition bias toward basic and acidic residues. The OVATE domain occupies 228–287 (IVLSSVDPEKDFRESMVEMIMENKMREQKDLEDLLACYLSLNSSEYHDVIIKAFENTWLH).

Interacts with BLH1, BLH3, KNAT5 and KNAT7.

It is found in the nucleus. Functionally, transcriptional repressor that may regulate multiple aspects of plant growth and development through the regulation of BEL1-LIKE (BLH) and KNOX TALE (KNAT) homeodomain transcription factors. This is Transcription repressor OFP3 (OFP3) from Arabidopsis thaliana (Mouse-ear cress).